The primary structure comprises 500 residues: Glycerol kinase (500 aa).

Position 16 (Thr-16) interacts with ADP. The ATP site is built by Thr-16 and Thr-17. Thr-16 provides a ligand contact to sn-glycerol 3-phosphate. Arg-20 provides a ligand contact to ADP. Residues Arg-86, Glu-87, Tyr-138, and Asp-247 each coordinate sn-glycerol 3-phosphate. Arg-86, Glu-87, Tyr-138, Asp-247, and Gln-248 together coordinate glycerol. ADP is bound by residues Thr-269 and Gly-312. Thr-269, Gly-312, Gln-316, and Gly-413 together coordinate ATP. Residues Gly-413 and Asn-417 each coordinate ADP.

The protein belongs to the FGGY kinase family.

The enzyme catalyses glycerol + ATP = sn-glycerol 3-phosphate + ADP + H(+). It participates in polyol metabolism; glycerol degradation via glycerol kinase pathway; sn-glycerol 3-phosphate from glycerol: step 1/1. Its activity is regulated as follows. Inhibited by fructose 1,6-bisphosphate (FBP). In terms of biological role, key enzyme in the regulation of glycerol uptake and metabolism. Catalyzes the phosphorylation of glycerol to yield sn-glycerol 3-phosphate. This Rippkaea orientalis (strain PCC 8801 / RF-1) (Cyanothece sp. (strain PCC 8801)) protein is Glycerol kinase.